Consider the following 129-residue polypeptide: Lysozyme C, milk isozyme (129 aa).

The region spanning 1 to 129 is the C-type lysozyme domain; the sequence is KVFSKCELAH…LSEYLASCNL (129 aa). Intrachain disulfides connect C6/C127, C30/C115, C65/C80, and C76/C94. Residues E35 and D53 contribute to the active site. Residues K82, D85, N87, D90, and D91 each contribute to the Ca(2+) site.

Belongs to the glycosyl hydrolase 22 family. Monomer. It depends on Ca(2+) as a cofactor.

It carries out the reaction Hydrolysis of (1-&gt;4)-beta-linkages between N-acetylmuramic acid and N-acetyl-D-glucosamine residues in a peptidoglycan and between N-acetyl-D-glucosamine residues in chitodextrins.. Functionally, lysozymes have primarily a bacteriolytic function; those in tissues and body fluids are associated with the monocyte-macrophage system and enhance the activity of immunoagents. The sequence is that of Lysozyme C, milk isozyme (LYZ) from Equus caballus (Horse).